Consider the following 719-residue polypeptide: Anaphase-promoting complex subunit 4 (719 aa).

Residues 57-96 (NSQRIWDVDFHDLEATELCWNHDGNLIVVGFKNGELKIID) form a WD repeat.

As to quaternary structure, the APC/C is composed of at least 13 subunits: apc1, apc2, nuc2, apc4, apc5, cut9, apc8, apc10, apc11, hcn1, apc13, apc14 and apc15. Interacts with apc1 and dim1.

Its function is as follows. Component of the anaphase-promoting complex/cyclosome (APC/C), a cell cycle-regulated E3 ubiquitin-protein ligase complex that controls progression through mitosis and the G1 phase of the cell cycle. The APC/C is thought to confer substrate specificity and, in the presence of ubiquitin-conjugating E2 enzymes, it catalyzes the formation of protein-ubiquitin conjugates that are subsequently degraded by the 26S proteasome. Has a role in promoting metaphase to anaphase transition via the ubiquitination of specific mitotic substrates. In Schizosaccharomyces pombe (strain 972 / ATCC 24843) (Fission yeast), this protein is Anaphase-promoting complex subunit 4 (cut20).